Consider the following 246-residue polypeptide: MTTVKTSPTTLPLHPLIHQLAEVIISHWQDYLDLSPYELPDGLGYVEGKLEGEKLVIENRCYQSPQFRKMHLELAKVGQGLDILHCVMFPNPDYALPMFGCDIVAGKGGVSAAIADLSPANPELTLSNSYNQALSQLETPNFSDQRELPEWGDIFSEYCLFIRPHTPEEEKLFLKRVGDFLKVHCQQANQSQPGSTQQREFNIQGQEYYCRKQQQNDKTRRVLEKAFGEAWANKYMTQVLFDIPNH.

It belongs to the HY2 family.

The catalysed reaction is (2R,3Z)-phycocyanobilin + 4 oxidized [2Fe-2S]-[ferredoxin] = biliverdin IXalpha + 4 reduced [2Fe-2S]-[ferredoxin] + 4 H(+). In terms of biological role, catalyzes the four-electron reduction of biliverdin IX-alpha (2-electron reduction at both the A and D rings); the reaction proceeds via an isolatable 2-electron intermediate, 181,182-dihydrobiliverdin. The chain is Phycocyanobilin:ferredoxin oxidoreductase from Crocosphaera subtropica (strain ATCC 51142 / BH68) (Cyanothece sp. (strain ATCC 51142)).